The sequence spans 367 residues: tRNA/tmRNA (uracil-C(5))-methyltransferase (367 aa).

Residues Gln190, Tyr218, Asn223, Glu239, and Asp299 each coordinate S-adenosyl-L-methionine. Cys324 serves as the catalytic Nucleophile. Glu358 (proton acceptor) is an active-site residue.

Belongs to the class I-like SAM-binding methyltransferase superfamily. RNA M5U methyltransferase family. TrmA subfamily.

It catalyses the reaction uridine(54) in tRNA + S-adenosyl-L-methionine = 5-methyluridine(54) in tRNA + S-adenosyl-L-homocysteine + H(+). The catalysed reaction is uridine(341) in tmRNA + S-adenosyl-L-methionine = 5-methyluridine(341) in tmRNA + S-adenosyl-L-homocysteine + H(+). Functionally, dual-specificity methyltransferase that catalyzes the formation of 5-methyluridine at position 54 (m5U54) in all tRNAs, and that of position 341 (m5U341) in tmRNA (transfer-mRNA). This chain is tRNA/tmRNA (uracil-C(5))-methyltransferase, found in Serratia proteamaculans (strain 568).